A 296-amino-acid chain; its full sequence is uncharacterized protein (296 aa).

The N-terminal 57 residues, 1-57 (MTSFLSFSAISAHPPTFSGASFRPRSFSPRLFKSCVKCTYAEAGLSSASWSAPIDIV), are a transit peptide targeting the chloroplast.

This sequence belongs to the NAD(P)-dependent epimerase/dehydratase family.

Its subcellular location is the plastid. It is found in the chloroplast. The protein localises to the plastoglobule. This is an uncharacterized protein from Arabidopsis thaliana (Mouse-ear cress).